A 321-amino-acid chain; its full sequence is Non-canonical heme oxygenase HOZ, chloroplastic (321 aa).

The N-terminal 45 residues, 1–45 (MKSLVAHFSTPLITARLVPRCIIHRASISAVSFSTVRRRFSPLTM), are a transit peptide targeting the chloroplast. The segment at 96-116 (CGMLSTFSQKYEGYPSGSMVD) is dimerization. Heme b contacts are provided by Ser-130, Val-134, and His-135. Dimerization regions lie at residues 144-166 (KCSLLIARDPEDRTGLRITLHGD) and 205-208 (KVVR).

As to quaternary structure, homodimer. Binds to heme in the interdimer interface; the heme iron is coordinated by a fixed water molecule.

The protein resides in the plastid. Its subcellular location is the chloroplast. Dimeric beta-barrel protein binding to heme and catalyzing its degradation to produce biliverdin. May function in the tetrapyrrole biosynthetic pathway. The chain is Non-canonical heme oxygenase HOZ, chloroplastic from Arabidopsis thaliana (Mouse-ear cress).